Here is a 127-residue protein sequence, read N- to C-terminus: Small ribosomal subunit protein bS6 (127 aa).

It belongs to the bacterial ribosomal protein bS6 family.

Binds together with bS18 to 16S ribosomal RNA. The chain is Small ribosomal subunit protein bS6 from Acinetobacter baumannii (strain AB0057).